The sequence spans 798 residues: Serine/threonine-protein kinase haspin (798 aa).

The disordered stretch occupies residues 1 to 110 (MAASLPGPGS…WKLRARPSLT (110 aa)). A Phosphoserine modification is found at S58. Acidic residues predominate over residues 59 to 70 (QSDDPDDPDDPD). S93 carries the post-translational modification Phosphoserine; by AURKB. The residue at position 97 (T97) is a Phosphothreonine. S143 is subject to Phosphoserine; by AURKB. Phosphoserine is present on S147. The segment at 275–350 (LVVGNGPEGP…KHQEATETSL (76 aa)) is disordered. Over residues 300–315 (CQERGLQEAVRREHQE) the composition is skewed to basic and acidic residues. One can recognise a Protein kinase domain in the interval 484 to 798 (LQRCEKIGEG…DLLCQHSLFK (315 aa)). ATP-binding positions include 490 to 498 (IGEGVFGEV), K511, 606 to 611 (EFGGID), 649 to 654 (DLHWGN), and 687 to 689 (DYT). D649 serves as the catalytic Proton acceptor.

This sequence belongs to the protein kinase superfamily. Ser/Thr protein kinase family. Haspin subfamily. Mg(2+) serves as cofactor. Post-translationally, autophosphorylated on both serine and threonine residues. Strongly phosphorylated during mitosis but this does not appear to significantly affect its intrinsic kinase activity. Phosphorylation by AURKB is required for full activity toward histone H3 at 'Ser-3' in mitosis. As to expression, strongly expressed in testis. Also present in thymus and bone marrow and low levels observed in prostate, intestine, lung, spleen and lymph node. Expressed in fetal skin, liver, kidney and small intestine and also in proliferating but not non-proliferating cell lines.

It is found in the nucleus. The protein resides in the chromosome. The protein localises to the cytoplasm. It localises to the cytoskeleton. Its subcellular location is the spindle. It catalyses the reaction L-seryl-[protein] + ATP = O-phospho-L-seryl-[protein] + ADP + H(+). It carries out the reaction L-threonyl-[protein] + ATP = O-phospho-L-threonyl-[protein] + ADP + H(+). With respect to regulation, constitutive activity that does not require phosphorylation. Specifically inhibited by 3-(1H-indazol-5-yl)-N-propylimidazo[1,2-b]pyridazin-6-amine (CHR-6494). Functionally, serine/threonine-protein kinase that phosphorylates histone H3 at 'Thr-3' (H3T3ph) during mitosis. May act through H3T3ph to both position and modulate activation of AURKB and other components of the chromosomal passenger complex (CPC) at centromeres to ensure proper chromatid cohesion, metaphase alignment and normal progression through the cell cycle. This is Serine/threonine-protein kinase haspin from Homo sapiens (Human).